The following is a 943-amino-acid chain: MDKIEVRGARTHNLKNINLTIPRDKLIVITGLSGSGKSSLAFDTLYAEGQRRYVESLSAYARQFLSLMEKPDVDHIEGLSPAISIEQKSTSHNPRSTVGTVTEIHDYLRLLFARVGEPRCPNHDVPLAAQTISQMVDKVLSLPEESKMMLLAPVVKERKGEHVKLLEQIAAQGYIRARIDGEICDLSDAPKLELHKKHTIEVVVDRFKVRSDLATRLAESFETALELSGGTAVVASMDEPETEELVFSANFACPHCGYSVPELEPRLFSFNNPAGACPTCDGLGVQQYFDEKRVVQNPSISLASGAVKGWDRRNFYYYQMLTSLAKHYEFDIESPFEALPKKIQQIILNGSGKEEIEFQYMNDRGDVVVRHHAFEGILNNMARRYKETESLSVREELAKNISTCPCHDCGGSRLRQEARHVYIGTTTLPDVAEKSIGETLHFFSELHLSGQRAQIAEKILKEIKERLQFLVNVGLDYLSLSRSAETLSGGEAQRIRLASQIGAGLVGVMYVLDEPSIGLHQRDNERLLNTLLHLRNLGNTVIVVEHDEDAIMAADHIIDIGPGAGVHGGQIVAEGSAKAIMANPHSITGKFLSGVEKIEIPAKRTALDKKKMLKLEGATGNNLKSVNLAIPVGLFTCVTGVSGSGKSTLINDTLFPLAQNALNRAENTQFAPYQSISGLEFFDKVIDIDQSPIGRTPRSNPATYTGLFTPIRELFAGVPESRARGYNPGRFSFNVRGGRCEACQGDGVIKVEMHFLPDVYVPCEQCKGKRYNRETLEIRYKGKTIHQVLEMTVEEAREFFDAIPQIARKLQTLMDVGLSYIRLGQSSTTLSGGEAQRVKLATELSKRDTGKTLYVLDEPTTGLHFADIKQLLTVLHRLRDQGNTIVVIEHNLDVIKTADWIIDLGPEGGNGGGQIIATGTPEQVAEVKGSHTARFLKTLLQKR.

Residue 31 to 38 (GLSGSGKS) coordinates ATP. The C4-type zinc finger occupies 253 to 280 (CPHCGYSVPELEPRLFSFNNPAGACPTC). 2 ABC transporter domains span residues 310-587 (WDRR…PHSI) and 607-937 (LDKK…RFLK). 640-647 (GVSGSGKS) is a binding site for ATP. The C4-type zinc-finger motif lies at 740-766 (CEACQGDGVIKVEMHFLPDVYVPCEQC).

The protein belongs to the ABC transporter superfamily. UvrA family. Forms a heterotetramer with UvrB during the search for lesions.

It localises to the cytoplasm. Its function is as follows. The UvrABC repair system catalyzes the recognition and processing of DNA lesions. UvrA is an ATPase and a DNA-binding protein. A damage recognition complex composed of 2 UvrA and 2 UvrB subunits scans DNA for abnormalities. When the presence of a lesion has been verified by UvrB, the UvrA molecules dissociate. The protein is UvrABC system protein A of Pasteurella multocida (strain Pm70).